The sequence spans 109 residues: Aquaporin-2 (109 aa).

Topologically, residues 1 to 6 are cytoplasmic; that stretch reads SIAFSR. Residues 7–27 traverse the membrane as a helical segment; the sequence is AVFSEFLATLLFVFFGLGSAL. Over 28 to 35 the chain is Extracellular; it reads NWPQALPS. The helical transmembrane segment at 36 to 54 threads the bilayer; it reads VLQIAMAFGLAIGTLVQTL. Topologically, residues 55 to 59 are cytoplasmic; that stretch reads GHISG. Positions 60-69 form an intramembrane region, discontinuously helical; the sequence is AHINPAVTVA. Residues 63–65 carry the NPA 1 motif; sequence NPA. Residues 70-80 lie on the Cytoplasmic side of the membrane; the sequence is CLVGCHVSFLR. A helical membrane pass occupies residues 81 to 102; the sequence is ATFYLAAQLLGAVAGAALLHEL. Residues 103-109 are Extracellular-facing; that stretch reads TPPDIRG.

The protein belongs to the MIP/aquaporin (TC 1.A.8) family. Homotetramer. In terms of processing, serine phosphorylation is necessary and sufficient for expression at the apical membrane. Endocytosis is not phosphorylation-dependent. N-glycosylated.

Its subcellular location is the apical cell membrane. It is found in the basolateral cell membrane. It localises to the cell membrane. The protein localises to the cytoplasmic vesicle membrane. The protein resides in the golgi apparatus. Its subcellular location is the trans-Golgi network membrane. It carries out the reaction H2O(in) = H2O(out). The catalysed reaction is glycerol(in) = glycerol(out). Its function is as follows. Forms a water-specific channel that provides the plasma membranes of renal collecting duct with high permeability to water, thereby permitting water to move in the direction of an osmotic gradient. Plays an essential role in renal water homeostasis. Could also be permeable to glycerol. The chain is Aquaporin-2 from Elephas maximus (Indian elephant).